A 266-amino-acid chain; its full sequence is Undecaprenyl-diphosphatase 1 (266 aa).

Transmembrane regions (helical) follow at residues 1 to 21 (MDTFQVIILALIQGLTEFLPI), 39 to 59 (QGLSFDVAVNTGSLFAVVIYF), 87 to 107 (WWIILATLPAVFFGFMAKDFI), 114 to 134 (TGVIAVTTVVFGLLLWWADKM), 149 to 169 (ALLIGFAQALALIPGTSRSGA), 183 to 203 (AAARFSFLMSVPVSLGAAILV), 218 to 238 (ALTLGTVISFAAAYLCIHYFL), and 246 to 266 (MTPFVIYRLALGAVLCGFIFL).

It belongs to the UppP family.

It is found in the cell inner membrane. The enzyme catalyses di-trans,octa-cis-undecaprenyl diphosphate + H2O = di-trans,octa-cis-undecaprenyl phosphate + phosphate + H(+). Its function is as follows. Catalyzes the dephosphorylation of undecaprenyl diphosphate (UPP). Confers resistance to bacitracin. The sequence is that of Undecaprenyl-diphosphatase 1 from Shewanella oneidensis (strain ATCC 700550 / JCM 31522 / CIP 106686 / LMG 19005 / NCIMB 14063 / MR-1).